Consider the following 244-residue polypeptide: tRNA pseudouridine synthase A (244 aa).

Asp52 acts as the Nucleophile in catalysis. Tyr110 is a binding site for substrate.

This sequence belongs to the tRNA pseudouridine synthase TruA family. Homodimer.

The enzyme catalyses uridine(38/39/40) in tRNA = pseudouridine(38/39/40) in tRNA. In terms of biological role, formation of pseudouridine at positions 38, 39 and 40 in the anticodon stem and loop of transfer RNAs. This chain is tRNA pseudouridine synthase A, found in Caldicellulosiruptor saccharolyticus (strain ATCC 43494 / DSM 8903 / Tp8T 6331).